Here is a 475-residue protein sequence, read N- to C-terminus: Protein FIZZY-RELATED 1 (475 aa).

Positions 1-27 are disordered; it reads MEEDESTTPKKKSDSQLNLPPSMNRPT. The segment covering 15–27 has biased composition (polar residues); it reads SQLNLPPSMNRPT. WD repeat units follow at residues 166–203, 207–246, 249–289, 290–329, 332–374, 376–417, and 420–459; these read QDDF…VTKL, GVDE…NIRT, GHRL…SKLK, GHKS…PVLR, EHAA…HLNC, DTNS…KLAT, and GHSY…KSQS.

This sequence belongs to the WD repeat CDC20/Fizzy family. As to quaternary structure, associates with the APC/C complex. Interacts with CDC20-1, CDC20-2, CYCA1-1, CYCA1-2, CYCA3-4, CYCB1-1 and CYCB1-2. Binds to GIG1. In terms of tissue distribution, expressed in the root tip, predominantly in the root cap, quiescent center cells, surrounding stem cells and columella.

The protein localises to the nucleus. The protein operates within protein modification; protein ubiquitination. Functionally, activator protein that regulates the ubiquitin ligase activity and substrate specificity of the anaphase promoting complex/cyclosome (APC/C). Required for meristem organization and maintenance of quiescent center identity and stem cells. The chain is Protein FIZZY-RELATED 1 (FZR1) from Arabidopsis thaliana (Mouse-ear cress).